Here is a 274-residue protein sequence, read N- to C-terminus: Exosome complex component RRP40 (274 aa).

The residue at position 2 (Ala2) is an N-acetylalanine. A Glycyl lysine isopeptide (Lys-Gly) (interchain with G-Cter in SUMO2) cross-link involves residue Lys150.

Belongs to the RRP40 family. As to quaternary structure, component of the RNA exosome core complex (Exo-9), composed of EXOSC1, EXOSC2, EXOSC3, EXOSC4, EXOSC5, EXOSC6, EXOSC7, EXOSC8 and EXOSC9; within the complex interacts with EXOSC5 and EXOSC9. The catalytically inactive RNA exosome core complex (Exo-9) associates with the catalytic subunit EXOSC10/RRP6. Exo-9 may associate with DIS3 to form the nucleolar exosome complex, or DIS3L to form the cytoplasmic exosome complex. Exo-9 is formed by a hexameric base ring consisting of the heterodimers EXOSC4-EXOSC9, EXOSC5-EXOSC8 and EXOSC6-EXOSC7, and a cap ring consisting of EXOSC1, EXOSC2 and EXOSC3. The RNA exosome complex associates with cofactors C1D/RRP47, MPHOSPH6/MPP6 and MTREX/MTR4. Interacts with MPHOSPH6/MPP6; the interaction is direct. Interacts with GTPBP1. Interacts with ZC3HAV1. Interacts with DDX17 only in the presence of ZC3HAV1 in an RNA-independent manner. Interacts with DHX36; this interaction occurs in a RNase-insensitive manner. Interacts with HBS1L isoform 2.

It localises to the cytoplasm. It is found in the nucleus. The protein resides in the nucleolus. Functionally, non-catalytic component of the RNA exosome complex which has 3'-&gt;5' exoribonuclease activity and participates in a multitude of cellular RNA processing and degradation events. In the nucleus, the RNA exosome complex is involved in proper maturation of stable RNA species such as rRNA, snRNA and snoRNA, in the elimination of RNA processing by-products and non-coding 'pervasive' transcripts, such as antisense RNA species and promoter-upstream transcripts (PROMPTs), and of mRNAs with processing defects, thereby limiting or excluding their export to the cytoplasm. The RNA exosome may be involved in Ig class switch recombination (CSR) and/or Ig variable region somatic hypermutation (SHM) by targeting AICDA deamination activity to transcribed dsDNA substrates. In the cytoplasm, the RNA exosome complex is involved in general mRNA turnover and specifically degrades inherently unstable mRNAs containing AU-rich elements (AREs) within their 3' untranslated regions, and in RNA surveillance pathways, preventing translation of aberrant mRNAs. It seems to be involved in degradation of histone mRNA. The catalytic inactive RNA exosome core complex of 9 subunits (Exo-9) is proposed to play a pivotal role in the binding and presentation of RNA for ribonucleolysis, and to serve as a scaffold for the association with catalytic subunits and accessory proteins or complexes. EXOSC3 as peripheral part of the Exo-9 complex stabilizes the hexameric ring of RNase PH-domain subunits through contacts with EXOSC9 and EXOSC5. The sequence is that of Exosome complex component RRP40 (Exosc3) from Mus musculus (Mouse).